The primary structure comprises 205 residues: Dephospho-CoA kinase (205 aa).

A DPCK domain is found at 7–204; the sequence is LVGLTGGIGS…ARYLAAARAT (198 aa). Residue 15 to 20 coordinates ATP; that stretch reads GSGKSA.

Belongs to the CoaE family.

It localises to the cytoplasm. The enzyme catalyses 3'-dephospho-CoA + ATP = ADP + CoA + H(+). The protein operates within cofactor biosynthesis; coenzyme A biosynthesis; CoA from (R)-pantothenate: step 5/5. Its function is as follows. Catalyzes the phosphorylation of the 3'-hydroxyl group of dephosphocoenzyme A to form coenzyme A. The protein is Dephospho-CoA kinase of Aromatoleum aromaticum (strain DSM 19018 / LMG 30748 / EbN1) (Azoarcus sp. (strain EbN1)).